The following is a 157-amino-acid chain: Probable succinate transporter subunit YjjB (157 aa).

A run of 4 helical transmembrane segments spans residues 8 to 28 (FALAQDMILAAIPAVGFAMVF), 57 to 77 (LNIEWSTFMASMLVGTIGIQW), 87 to 107 (VFTVAAVIPMFPGISAYTAMI), and 129 to 149 (FLTASSIVGALSIGLSIPGLW).

It belongs to the ThrE exporter (TC 2.A.79) family. The transporter is composed of YjjB and YjjP.

The protein localises to the cell inner membrane. In terms of biological role, involved in succinate export with YjjP. Both proteins are required for export. The sequence is that of Probable succinate transporter subunit YjjB from Shigella boydii serotype 4 (strain Sb227).